The sequence spans 520 residues: Poly(A)-specific ribonuclease PNLDC1 (520 aa).

Mg(2+)-binding residues include aspartate 17, glutamate 19, aspartate 260, and aspartate 354. The helical transmembrane segment at 495–515 (VNCLLQVCGIVTAWALLAFIL) threads the bilayer.

The protein belongs to the CAF1 family. Requires Mg(2+) as cofactor.

The protein resides in the endoplasmic reticulum membrane. The enzyme catalyses Exonucleolytic cleavage of poly(A) to 5'-AMP.. Functionally, 3'-exoribonuclease that has a preference for poly(A) tails of mRNAs, thereby efficiently degrading poly(A) tails. Exonucleolytic degradation of the poly(A) tail is often the first step in the decay of eukaryotic mRNAs and is also used to silence certain maternal mRNAs translationally during oocyte maturation and early embryonic development. May act as a regulator of multipotency in embryonic stem cells. Is a critical factor for proper spermatogenesis, involved in pre-piRNAs processing to generate mature piRNAs. The polypeptide is Poly(A)-specific ribonuclease PNLDC1 (Homo sapiens (Human)).